Consider the following 397-residue polypeptide: Purine ribonucleoside efflux pump NepI (397 aa).

Residues 1-21 (MNENIAEKFRADGVARPNWSA) lie on the Cytoplasmic side of the membrane. Residues 22-42 (VFAVAFCVACLITVEFLPVSL) traverse the membrane as a helical segment. At 43-54 (LTPMAQDLGISE) the chain is on the periplasmic side. Residues 55–75 (GVAGQSVTVTAFVAMFSSLFI) form a helical membrane-spanning segment. At 76 to 85 (TQIIQATDRR) the chain is on the cytoplasmic side. Residues 86–106 (YIVILFAVLLTASCLMVSFAN) form a helical membrane-spanning segment. S107 is a topological domain (periplasmic). A helical membrane pass occupies residues 108–128 (FTLLLLGRACLGLALGGFWAI). Residues 129 to 147 (SASLTMRLVPARTVPKALS) are Cytoplasmic-facing. The chain crosses the membrane as a helical span at residues 148–168 (VIFGAVSIALVIAAPLGSFLG). Over 169 to 175 (GIIGWRN) the chain is Periplasmic. A helical membrane pass occupies residues 176-196 (VFNAAAVMGVLCVIWVVKSLP). Over 197 to 215 (SLPGEPSHQKQNMFSLLQR) the chain is Cytoplasmic. Residues 216 to 236 (PGVMAGMIAIFMSFAGQFAFF) traverse the membrane as a helical segment. The Periplasmic portion of the chain corresponds to 237–255 (TYIRPVYMNLAGFDVDGLT). A helical transmembrane segment spans residues 256-276 (LVLLSFGIASFVGTSFSSYVL). Residues 277–281 (KRSVK) are Cytoplasmic-facing. Residues 282–302 (LALAGAPLLLALSALTLIVWG) form a helical membrane-spanning segment. Residues 303–305 (SDK) lie on the Periplasmic side of the membrane. The helical transmembrane segment at 306–326 (TVAAAIAIIWGLAFALVPVGW) threads the bilayer. Topologically, residues 327–343 (STWITRSLADQAEKAGS) are cytoplasmic. A helical membrane pass occupies residues 344 to 364 (IQVAVIQLANTCGAAVGGYAL). The Periplasmic segment spans residues 365–366 (DN). Residues 367–387 (FGLLSPLALSGGLMLLTALVV) form a helical membrane-spanning segment. At 388 to 397 (AAKVRITPMS) the chain is on the cytoplasmic side.

It belongs to the major facilitator superfamily. DHA1 family. NepI (TC 2.A.1.2.26) subfamily.

The protein localises to the cell inner membrane. The enzyme catalyses inosine(in) + H(+)(out) = inosine(out) + H(+)(in). It catalyses the reaction guanosine(in) + H(+)(out) = guanosine(out) + H(+)(in). Functionally, involved in the efflux of purine ribonucleosides, such as inosine and guanosine. In Salmonella paratyphi A (strain ATCC 9150 / SARB42), this protein is Purine ribonucleoside efflux pump NepI.